The primary structure comprises 329 residues: Ig gamma-2 chain C region (329 aa).

Disulfide bonds link C28-C79, C142-C202, and C248-C308. The N-linked (GlcNAc...) asparagine glycan is linked to N178.

It is found in the secreted. The protein is Ig gamma-2 chain C region of Cavia porcellus (Guinea pig).